The primary structure comprises 281 residues: Protein-S-isoprenylcysteine O-methyltransferase (281 aa).

Residues 1-2 (ML) are Cytoplasmic-facing. A helical transmembrane segment spans residues 3–29 (SPAGKISLQSFTGSSLVFFVICMFNHY). The Lumenal segment spans residues 30 to 35 (YGITNL). Residues 36-53 (VVNTLIVFFYAVNVYFFL) traverse the membrane as a helical segment. The Cytoplasmic portion of the chain corresponds to 54–58 (KFFYN). A helical membrane pass occupies residues 59–85 (EFAFAIAIRAAFLGLVLVLGLYIKLVA). The Lumenal segment spans residues 86 to 88 (PPN). Residues 89–113 (IQIFGGYMSVMALFHYSEFLAIAIV) form a helical membrane-spanning segment. Residues 114–118 (QPKQV) lie on the Cytoplasmic side of the membrane. A helical transmembrane segment spans residues 119–149 (STDSFVINHSPQYTIAAVSSWVEFFIETYFF). The Lumenal segment spans residues 150–155 (PGLKEI). Residues 156 to 181 (HWLSNIGLCVCILGEVLRKTAILTAG) form a helical membrane-spanning segment. Over 182–208 (SNFNHLVQCEKSSDHVLVTHGVYAWFR) the chain is Cytoplasmic. S-adenosyl-L-methionine is bound by residues Gln189, 196–199 (HVLV), Tyr204, and 209–212 (HPSY). Residues 209–226 (HPSYVGWFYWSIGTQIIL) form a helical membrane-spanning segment. The Lumenal segment spans residues 227 to 229 (INP). The chain crosses the membrane as a helical span at residues 230-243 (LCIPAYTLASWMFF). The Cytoplasmic segment spans residues 244–281 (KERIYIEESMLLSFFGQQYCDYQQQVGTGIPFIEGYKI). Arg246 contacts substrate. Residue Glu250 participates in S-adenosyl-L-methionine binding.

This sequence belongs to the class VI-like SAM-binding methyltransferase superfamily. Isoprenylcysteine carboxyl methyltransferase family.

The protein localises to the endoplasmic reticulum membrane. The enzyme catalyses [protein]-C-terminal S-[(2E,6E)-farnesyl]-L-cysteine + S-adenosyl-L-methionine = [protein]-C-terminal S-[(2E,6E)-farnesyl]-L-cysteine methyl ester + S-adenosyl-L-homocysteine. In terms of biological role, catalyzes the post-translational methylation of isoprenylated C-terminal cysteine residues. This is Protein-S-isoprenylcysteine O-methyltransferase from Tribolium castaneum (Red flour beetle).